Consider the following 129-residue polypeptide: Small ribosomal subunit protein uS11 (129 aa).

It belongs to the universal ribosomal protein uS11 family. Part of the 30S ribosomal subunit. Interacts with proteins S7 and S18. Binds to IF-3.

Functionally, located on the platform of the 30S subunit, it bridges several disparate RNA helices of the 16S rRNA. Forms part of the Shine-Dalgarno cleft in the 70S ribosome. The polypeptide is Small ribosomal subunit protein uS11 (Geobacillus stearothermophilus (Bacillus stearothermophilus)).